The sequence spans 380 residues: Chaperone protein DnaJ (380 aa).

The J domain maps to 5–70; that stretch reads DFYDVLGVNR…QKRAAYDQYG (66 aa). Residues 139–217 form a CR-type zinc finger; it reads GCEKQIRIPT…CHGAGRVKSQ (79 aa). Zn(2+) is bound by residues Cys152, Cys155, Cys169, Cys172, Cys191, Cys194, Cys205, and Cys208. 4 CXXCXGXG motif repeats span residues 152–159, 169–176, 191–198, and 205–212; these read CSHCHGSG, CPTCGGAG, CPTCHGSG, and CNICHGAG.

Belongs to the DnaJ family. Homodimer. Zn(2+) serves as cofactor.

It localises to the cytoplasm. Its function is as follows. Participates actively in the response to hyperosmotic and heat shock by preventing the aggregation of stress-denatured proteins and by disaggregating proteins, also in an autonomous, DnaK-independent fashion. Unfolded proteins bind initially to DnaJ; upon interaction with the DnaJ-bound protein, DnaK hydrolyzes its bound ATP, resulting in the formation of a stable complex. GrpE releases ADP from DnaK; ATP binding to DnaK triggers the release of the substrate protein, thus completing the reaction cycle. Several rounds of ATP-dependent interactions between DnaJ, DnaK and GrpE are required for fully efficient folding. Also involved, together with DnaK and GrpE, in the DNA replication of plasmids through activation of initiation proteins. The polypeptide is Chaperone protein DnaJ (Laribacter hongkongensis (strain HLHK9)).